The sequence spans 367 residues: uncharacterized protein (367 aa).

Positions 4–234 (LTFEHVKKSY…PANLFVAGFI (231 aa)) constitute an ABC transporter domain. ATP is bound at residue 36–43 (GPSGCGKS).

This sequence belongs to the ABC transporter superfamily.

This is an uncharacterized protein from Bacillus subtilis (strain 168).